Consider the following 192-residue polypeptide: Signal peptidase complex subunit 2 (192 aa).

Residues 1–46 are Cytoplasmic-facing; it reads MEEKKTESTNKNVKKANLLDHHSIKHILDESVSDIVTSRGYKEDVR. The helical transmembrane segment at 47-69 threads the bilayer; that stretch reads LSNLKLILGTIIIVVALVAQFYN. Residues 70–78 lie on the Lumenal side of the membrane; it reads KKFPENRDF. Residues 79–98 traverse the membrane as a helical segment; it reads LIGCIALYVVLNAVLQLILY. Topologically, residues 99–192 are cytoplasmic; it reads TKEKNAILFT…YAEEEPKKKK (94 aa).

This sequence belongs to the SPCS2 family. Component of the signal peptidase complex (SPC) composed of a catalytic subunit SEC11 and three accessory subunits SPCS1, SPCS2 and SPCS3. The complex induces a local thinning of the ER membrane which is used to measure the length of the signal peptide (SP) h-region of protein substrates. This ensures the selectivity of the complex towards h-regions shorter than 18-20 amino acids.

It is found in the endoplasmic reticulum membrane. In terms of biological role, component of the signal peptidase complex (SPC) which catalyzes the cleavage of N-terminal signal sequences from nascent proteins as they are translocated into the lumen of the endoplasmic reticulum. Enhances the enzymatic activity of SPC and facilitates the interactions between different components of the translocation site. The chain is Signal peptidase complex subunit 2 from Arabidopsis thaliana (Mouse-ear cress).